The following is a 635-amino-acid chain: Threonine--tRNA ligase (635 aa).

One can recognise a TGS domain in the interval 1 to 61; it reads MINISFPDGS…DNDCKLRILT (61 aa). Residues 242–533 form a catalytic region; that stretch reads DHRKLGRELD…LIEEYAGRFP (292 aa). Zn(2+) contacts are provided by C333, H384, and H510.

Belongs to the class-II aminoacyl-tRNA synthetase family. As to quaternary structure, homodimer. Requires Zn(2+) as cofactor.

It is found in the cytoplasm. The catalysed reaction is tRNA(Thr) + L-threonine + ATP = L-threonyl-tRNA(Thr) + AMP + diphosphate + H(+). Functionally, catalyzes the attachment of threonine to tRNA(Thr) in a two-step reaction: L-threonine is first activated by ATP to form Thr-AMP and then transferred to the acceptor end of tRNA(Thr). Also edits incorrectly charged L-seryl-tRNA(Thr). This chain is Threonine--tRNA ligase, found in Rickettsia africae (strain ESF-5).